Reading from the N-terminus, the 82-residue chain is Cytochrome b-c1 complex subunit 8 (82 aa).

Topologically, residues 1–43 are mitochondrial matrix; it reads MGREFGNLARIRHVISYSLSPFEQRAFPSYFSKGIPNVLRRTR. Serine 16 is subject to Phosphoserine. Lysine 33 is subject to N6-acetyllysine; alternate. The residue at position 33 (lysine 33) is an N6-succinyllysine; alternate. The chain crosses the membrane as a helical span at residues 44-62; the sequence is ERILRVAPPFVVVYLIYTW. The Mitochondrial intermembrane segment spans residues 63-82; it reads GNQEFEQSKRKNPAMYENDK.

This sequence belongs to the UQCRQ/QCR8 family. In terms of assembly, component of the ubiquinol-cytochrome c oxidoreductase (cytochrome b-c1 complex, complex III, CIII), a multisubunit enzyme composed of 11 subunits. The complex is composed of 3 respiratory subunits cytochrome b, cytochrome c1 and Rieske protein UQCRFS1, 2 core protein subunits UQCRC1/QCR1 and UQCRC2/QCR2, and 6 low-molecular weight protein subunits UQCRH/QCR6, UQCRB/QCR7, UQCRQ/QCR8, UQCR10/QCR9, UQCR11/QCR10 and subunit 9, the cleavage product of Rieske protein UQCRFS1. The complex exists as an obligatory dimer and forms supercomplexes (SCs) in the inner mitochondrial membrane with NADH-ubiquinone oxidoreductase (complex I, CI) and cytochrome c oxidase (complex IV, CIV), resulting in different assemblies (supercomplex SCI(1)III(2)IV(1) and megacomplex MCI(2)III(2)IV(2)). Interacts with UQCC6.

Its subcellular location is the mitochondrion inner membrane. Functionally, component of the ubiquinol-cytochrome c oxidoreductase, a multisubunit transmembrane complex that is part of the mitochondrial electron transport chain which drives oxidative phosphorylation. The respiratory chain contains 3 multisubunit complexes succinate dehydrogenase (complex II, CII), ubiquinol-cytochrome c oxidoreductase (cytochrome b-c1 complex, complex III, CIII) and cytochrome c oxidase (complex IV, CIV), that cooperate to transfer electrons derived from NADH and succinate to molecular oxygen, creating an electrochemical gradient over the inner membrane that drives transmembrane transport and the ATP synthase. The cytochrome b-c1 complex catalyzes electron transfer from ubiquinol to cytochrome c, linking this redox reaction to translocation of protons across the mitochondrial inner membrane, with protons being carried across the membrane as hydrogens on the quinol. In the process called Q cycle, 2 protons are consumed from the matrix, 4 protons are released into the intermembrane space and 2 electrons are passed to cytochrome c. The protein is Cytochrome b-c1 complex subunit 8 (Uqcrq) of Mus musculus (Mouse).